A 479-amino-acid polypeptide reads, in one-letter code: 3-isopropylmalate dehydratase large subunit (479 aa).

[4Fe-4S] cluster-binding residues include C350, C415, and C418.

The protein belongs to the aconitase/IPM isomerase family. LeuC type 1 subfamily. In terms of assembly, heterodimer of LeuC and LeuD. The cofactor is [4Fe-4S] cluster.

The enzyme catalyses (2R,3S)-3-isopropylmalate = (2S)-2-isopropylmalate. It participates in amino-acid biosynthesis; L-leucine biosynthesis; L-leucine from 3-methyl-2-oxobutanoate: step 2/4. Catalyzes the isomerization between 2-isopropylmalate and 3-isopropylmalate, via the formation of 2-isopropylmaleate. The chain is 3-isopropylmalate dehydratase large subunit from Caulobacter vibrioides (strain ATCC 19089 / CIP 103742 / CB 15) (Caulobacter crescentus).